The chain runs to 441 residues: Squalene synthase (441 aa).

A run of 2 helical transmembrane segments spans residues 293 to 313 (SFQF…LVFG) and 420 to 440 (FKFN…YWYA).

It belongs to the phytoene/squalene synthase family. The cofactor is Mg(2+).

The protein resides in the endoplasmic reticulum membrane. It catalyses the reaction 2 (2E,6E)-farnesyl diphosphate + NADPH + H(+) = squalene + 2 diphosphate + NADP(+). It carries out the reaction 2 (2E,6E)-farnesyl diphosphate + NADH + H(+) = squalene + 2 diphosphate + NAD(+). It functions in the pathway terpene metabolism; lanosterol biosynthesis; lanosterol from farnesyl diphosphate: step 1/3. Its function is as follows. Catalyzes the condensation of 2 two farnesyl pyrophosphate moieties to form squalene. It is the first committed enzyme of the sterol biosynthesis pathway. Required for the biosynthesis of ergosterol. The protein is Squalene synthase (ERG9) of Eremothecium gossypii (strain ATCC 10895 / CBS 109.51 / FGSC 9923 / NRRL Y-1056) (Yeast).